The following is a 153-amino-acid chain: Ribosome maturation factor RimP (153 aa).

It belongs to the RimP family.

The protein localises to the cytoplasm. Its function is as follows. Required for maturation of 30S ribosomal subunits. In Nostoc punctiforme (strain ATCC 29133 / PCC 73102), this protein is Ribosome maturation factor RimP.